The chain runs to 256 residues: DNA polymerase sliding clamp 2 (256 aa).

Belongs to the PCNA family. In terms of assembly, homotrimer. The subunits circularize to form a toroid; DNA passes through its center. Replication factor C (RFC) is required to load the toroid on the DNA.

Its function is as follows. Sliding clamp subunit that acts as a moving platform for DNA processing. Responsible for tethering the catalytic subunit of DNA polymerase and other proteins to DNA during high-speed replication. This Pyrobaculum aerophilum (strain ATCC 51768 / DSM 7523 / JCM 9630 / CIP 104966 / NBRC 100827 / IM2) protein is DNA polymerase sliding clamp 2.